We begin with the raw amino-acid sequence, 240 residues long: 2,3,4,5-tetrahydropyridine-2,6-dicarboxylate N-acetyltransferase (240 aa).

This sequence belongs to the transferase hexapeptide repeat family. DapH subfamily.

It catalyses the reaction (S)-2,3,4,5-tetrahydrodipicolinate + acetyl-CoA + H2O = L-2-acetamido-6-oxoheptanedioate + CoA. It functions in the pathway amino-acid biosynthesis; L-lysine biosynthesis via DAP pathway; LL-2,6-diaminopimelate from (S)-tetrahydrodipicolinate (acetylase route): step 1/3. In terms of biological role, catalyzes the transfer of an acetyl group from acetyl-CoA to tetrahydrodipicolinate. The protein is 2,3,4,5-tetrahydropyridine-2,6-dicarboxylate N-acetyltransferase of Bacillus mycoides (strain KBAB4) (Bacillus weihenstephanensis).